The primary structure comprises 413 residues: Serine hydroxymethyltransferase (413 aa).

Residues L117 and 121-123 (GHL) contribute to the (6S)-5,6,7,8-tetrahydrofolate site. Position 226 is an N6-(pyridoxal phosphate)lysine (K226). 349 to 351 (SPF) is a (6S)-5,6,7,8-tetrahydrofolate binding site.

Belongs to the SHMT family. Homodimer. Requires pyridoxal 5'-phosphate as cofactor.

The protein resides in the cytoplasm. It catalyses the reaction (6R)-5,10-methylene-5,6,7,8-tetrahydrofolate + glycine + H2O = (6S)-5,6,7,8-tetrahydrofolate + L-serine. Its pathway is one-carbon metabolism; tetrahydrofolate interconversion. The protein operates within amino-acid biosynthesis; glycine biosynthesis; glycine from L-serine: step 1/1. Functionally, catalyzes the reversible interconversion of serine and glycine with tetrahydrofolate (THF) serving as the one-carbon carrier. This reaction serves as the major source of one-carbon groups required for the biosynthesis of purines, thymidylate, methionine, and other important biomolecules. Also exhibits THF-independent aldolase activity toward beta-hydroxyamino acids, producing glycine and aldehydes, via a retro-aldol mechanism. In Listeria innocua serovar 6a (strain ATCC BAA-680 / CLIP 11262), this protein is Serine hydroxymethyltransferase.